Reading from the N-terminus, the 396-residue chain is Acetate kinase (396 aa).

Residue Asn7 coordinates Mg(2+). Lys14 provides a ligand contact to ATP. Substrate is bound at residue Arg91. Residue Asp148 is the Proton donor/acceptor of the active site. Residues 208-212 (HLGNG), 283-285 (DFR), and 331-335 (GLGEN) contribute to the ATP site. Glu384 serves as a coordination point for Mg(2+).

Belongs to the acetokinase family. In terms of assembly, homodimer. Requires Mg(2+) as cofactor. Mn(2+) serves as cofactor.

It is found in the cytoplasm. The catalysed reaction is acetate + ATP = acetyl phosphate + ADP. The protein operates within metabolic intermediate biosynthesis; acetyl-CoA biosynthesis; acetyl-CoA from acetate: step 1/2. Its function is as follows. Catalyzes the formation of acetyl phosphate from acetate and ATP. Can also catalyze the reverse reaction. The sequence is that of Acetate kinase from Alkaliphilus metalliredigens (strain QYMF).